The sequence spans 232 residues: 6-phosphogluconolactonase (232 aa).

The protein belongs to the glucosamine/galactosamine-6-phosphate isomerase family. 6-phosphogluconolactonase subfamily.

The catalysed reaction is 6-phospho-D-glucono-1,5-lactone + H2O = 6-phospho-D-gluconate + H(+). It participates in carbohydrate degradation; pentose phosphate pathway; D-ribulose 5-phosphate from D-glucose 6-phosphate (oxidative stage): step 2/3. In terms of biological role, hydrolysis of 6-phosphogluconolactone to 6-phosphogluconate. The chain is 6-phosphogluconolactonase (pgl) from Rhizobium meliloti (strain 1021) (Ensifer meliloti).